The primary structure comprises 485 residues: Heat stress transcription factor A-1d (485 aa).

Disordered regions lie at residues 1–34 (MDVS…SSNA) and 126–149 (RRKP…QNSS). The DNA-binding element occupies 35–129 (PPPFLSKTYD…LLQSITRRKP (95 aa)). The segment covering 136–146 (GHQRSQHSNGQ) has biased composition (low complexity). The tract at residues 152–218 (ACVEVGKFGL…QLMSFLAKAV (67 aa)) is hydrophobic repeat HR-A/B. Disordered regions lie at residues 229–269 (QQQN…GQIV) and 436–461 (PVPD…DKTK). A Bipartite nuclear localization signal motif is present at residues 238–252 (NRRISDTSKKRRFKR). The segment covering 441 to 455 (MDSTPVDNETEQEQN) has biased composition (polar residues). The Nuclear export signal motif lies at 472–480 (LLSPETLDL).

Belongs to the HSF family. Class A subfamily. In terms of assembly, homotrimer. Interacts with HSP90-2. In terms of processing, exhibits temperature-dependent phosphorylation.

It localises to the cytoplasm. The protein resides in the nucleus. Transcriptional regulator that specifically binds DNA sequence 5'-AGAAnnTTCT-3' known as heat shock promoter elements (HSE). The chain is Heat stress transcription factor A-1d (HSFA1D) from Arabidopsis thaliana (Mouse-ear cress).